Consider the following 477-residue polypeptide: ATP synthase subunit beta (477 aa).

An ATP-binding site is contributed by 163–170 (GGAGVGKT).

It belongs to the ATPase alpha/beta chains family. F-type ATPases have 2 components, CF(1) - the catalytic core - and CF(0) - the membrane proton channel. CF(1) has five subunits: alpha(3), beta(3), gamma(1), delta(1), epsilon(1). CF(0) has four main subunits: a(1), b(1), b'(1) and c(9-12).

It is found in the cellular thylakoid membrane. The catalysed reaction is ATP + H2O + 4 H(+)(in) = ADP + phosphate + 5 H(+)(out). Functionally, produces ATP from ADP in the presence of a proton gradient across the membrane. The catalytic sites are hosted primarily by the beta subunits. This is ATP synthase subunit beta from Synechococcus sp. (strain JA-3-3Ab) (Cyanobacteria bacterium Yellowstone A-Prime).